We begin with the raw amino-acid sequence, 478 residues long: Zinc finger and SCAN domain-containing protein 26 (478 aa).

A Glycyl lysine isopeptide (Lys-Gly) (interchain with G-Cter in SUMO2) cross-link involves residue K17. One can recognise an SCAN box domain in the interval 51–133; that stretch reads CKQFRQLRYE…VVLEDLQLDL (83 aa). Disordered stretches follow at residues 159–181 and 200–226; these read GVQE…KGEE and ESSG…AKPK. 2 stretches are compositionally biased toward basic and acidic residues: residues 164 to 181 and 207 to 226; these read QVRH…KGEE and EPME…AKPK. The segment at 231 to 253 adopts a C2H2-type 1; degenerate zinc-finger fold; that stretch reads YKCSEREQRFIQHLDLIEHASTH. 7 C2H2-type zinc fingers span residues 282 to 304, 310 to 332, 338 to 360, 366 to 388, 394 to 416, 422 to 444, and 450 to 472; these read HQCH…QKIH, YQCN…LRIH, YLCI…QRIH, CECK…QRIH, HQCN…HRIH, FKCN…VRIH, and YQCS…QRYH.

The protein localises to the nucleus. Its function is as follows. May be involved in transcriptional regulation. This Homo sapiens (Human) protein is Zinc finger and SCAN domain-containing protein 26 (ZSCAN26).